The chain runs to 151 residues: Large ribosomal subunit protein bL17 (151 aa).

A disordered region spans residues E118–D151. Positions P131–A144 are enriched in low complexity.

The protein belongs to the bacterial ribosomal protein bL17 family. In terms of assembly, part of the 50S ribosomal subunit. Contacts protein L32.

This chain is Large ribosomal subunit protein bL17, found in Syntrophobacter fumaroxidans (strain DSM 10017 / MPOB).